The chain runs to 518 residues: Adenine deaminase (518 aa).

It belongs to the metallo-dependent hydrolases superfamily. Adenine deaminase family. The cofactor is Mn(2+).

The enzyme catalyses adenine + H2O + H(+) = hypoxanthine + NH4(+). This is Adenine deaminase from Methanoculleus marisnigri (strain ATCC 35101 / DSM 1498 / JR1).